The following is a 1123-amino-acid chain: Phytochrome 1 (1123 aa).

Positions 1–15 are enriched in low complexity; that stretch reads MSTPKKTYSSTSSAK. The interval 1–20 is disordered; sequence MSTPKKTYSSTSSAKSKAHS. Positions 216-395 constitute a GAF domain; sequence DIGLLCDTVV…VFGLQLNMEV (180 aa). Position 321 (C321) interacts with phytochromobilin. PAS domains lie at 610-681 and 744-815; these read VANE…LRGE and DYKT…TKFM. One can recognise a Histidine kinase domain in the interval 895–1115; the sequence is YIRQEIKNPL…VVNVELPMAQ (221 aa).

The protein belongs to the phytochrome family. In terms of assembly, homodimer. In terms of processing, contains one covalently linked phytochromobilin chromophore.

The protein resides in the cytoplasm. In terms of biological role, regulatory photoreceptor which exists in two forms that are reversibly interconvertible by light: the Pr form that absorbs maximally in the red region of the spectrum and the Pfr form that absorbs maximally in the far-red region. Photoconversion of Pr to Pfr induces an array of morphogenetic responses, whereas reconversion of Pfr to Pr cancels the induction of those responses. Pfr controls the expression of a number of nuclear genes including those encoding the small subunit of ribulose-bisphosphate carboxylase, chlorophyll A/B binding protein, protochlorophyllide reductase, rRNA, etc. It also controls the expression of its own gene(s) in a negative feedback fashion. Mediates chloroplast avoidance movement in cytoplasm. This Physcomitrium patens (Spreading-leaved earth moss) protein is Phytochrome 1 (PHY1).